Consider the following 256-residue polypeptide: Thiazole synthase (256 aa).

The Schiff-base intermediate with DXP role is filled by lysine 95. Residues glycine 156, 182–183, and 204–205 each bind 1-deoxy-D-xylulose 5-phosphate; these read AG and NT.

This sequence belongs to the ThiG family. As to quaternary structure, homotetramer. Forms heterodimers with either ThiH or ThiS.

Its subcellular location is the cytoplasm. The catalysed reaction is [ThiS sulfur-carrier protein]-C-terminal-Gly-aminoethanethioate + 2-iminoacetate + 1-deoxy-D-xylulose 5-phosphate = [ThiS sulfur-carrier protein]-C-terminal Gly-Gly + 2-[(2R,5Z)-2-carboxy-4-methylthiazol-5(2H)-ylidene]ethyl phosphate + 2 H2O + H(+). It functions in the pathway cofactor biosynthesis; thiamine diphosphate biosynthesis. Functionally, catalyzes the rearrangement of 1-deoxy-D-xylulose 5-phosphate (DXP) to produce the thiazole phosphate moiety of thiamine. Sulfur is provided by the thiocarboxylate moiety of the carrier protein ThiS. In vitro, sulfur can be provided by H(2)S. This chain is Thiazole synthase, found in Idiomarina loihiensis (strain ATCC BAA-735 / DSM 15497 / L2-TR).